A 175-amino-acid polypeptide reads, in one-letter code: Rubredoxin-1 (175 aa).

Rubredoxin-like domains follow at residues 1 to 53 (MARY…FVLI) and 119 to 170 (FLKW…YVLY). Residues Cys-6, Cys-9, Cys-39, Cys-42, Cys-124, Cys-127, Cys-157, and Cys-160 each contribute to the Fe cation site.

It belongs to the rubredoxin family. Requires Fe(3+) as cofactor.

The protein localises to the cytoplasm. The protein operates within hydrocarbon metabolism; alkane degradation. Functionally, involved in the hydrocarbon hydroxylating system, which transfers electrons from NADH to rubredoxin reductase and then through rubredoxin to alkane 1 monooxygenase. The chain is Rubredoxin-1 (alkG) from Pseudomonas putida (Arthrobacter siderocapsulatus).